The following is a 343-amino-acid chain: Homeobox protein DBX1 (343 aa).

Disordered regions lie at residues 56–100 (RSVP…TAFS) and 240–343 (KERE…ITVS). A DNA-binding region (homeobox) is located at residues 181–240 (GMLRRAVFSDVQRKALEKMFQKQKYISKPDRKKLAAKLGLKDSQVKIWFQNRRMKWRNSK). Positions 314-323 (AHSSSPGKPS) are enriched in low complexity. Positions 326 to 343 (SDSEEEEEGEEQEEITVS) are enriched in acidic residues.

It belongs to the H2.0 homeobox family.

It is found in the nucleus. Its function is as follows. Could have a role in patterning the central nervous system during embryogenesis. Has a key role in regulating the distinct phenotypic features that distinguish two major classes of ventral interneurons, V0 and V1 neurons. Regulates the transcription factor profile, neurotransmitter phenotype, intraspinal migratory path and axonal trajectory of V0 neurons, features that differentiate them from an adjacent set of V1 neurons. This is Homeobox protein DBX1 (DBX1) from Homo sapiens (Human).